A 247-amino-acid chain; its full sequence is Caffeoyl-CoA O-methyltransferase 2 (247 aa).

Lys21 contributes to the substrate binding site. S-adenosyl-L-methionine-binding positions include Thr63, Glu85, 87–88 (GV), Ser93, Asp111, and Ala140. Asp163 serves as a coordination point for substrate. Asp163 lines the a divalent metal cation pocket. Residue Asp165 coordinates S-adenosyl-L-methionine. Residues Asp189 and Asn190 each coordinate a divalent metal cation. Residue Asn194 participates in substrate binding.

It belongs to the class I-like SAM-binding methyltransferase superfamily. Cation-dependent O-methyltransferase family. CCoAMT subfamily. A divalent metal cation is required as a cofactor.

It catalyses the reaction (E)-caffeoyl-CoA + S-adenosyl-L-methionine = (E)-feruloyl-CoA + S-adenosyl-L-homocysteine + H(+). Its pathway is aromatic compound metabolism; phenylpropanoid biosynthesis. Methylates caffeoyl-CoA to feruloyl-CoA and 5-hydroxyferuloyl-CoA to sinapoyl-CoA. Plays a role in the synthesis of feruloylated polysaccharides. Involved in the reinforcement of the plant cell wall. Also involved in the responding to wounding or pathogen challenge by the increased formation of cell wall-bound ferulic acid polymers. The chain is Caffeoyl-CoA O-methyltransferase 2 (CCOAOMT2) from Populus trichocarpa (Western balsam poplar).